Here is a 653-residue protein sequence, read N- to C-terminus: MRYIGSKKLLLPEIKKMVDKHTDGSEEVFLDLFAGTNVVANYFKQFYTVYSNDMLFFSYVNAKATIENNSKPSFSKLIQAGISSPMTYLQNLEVNDETIGYYEVAYSPTGEANYLSVHNAKKLDIIRSQIESWKNQNLLTEHEYYYLLSSLIEALPFISNTTGTYGAFLKHWDKRSLNDLELQDFTIFDNSKQNKAFNEDANELVQKIKADIVYIDTPYNSRQYASNYHLLENVARNEHPTLKGITKIFDWKNLKSDYATKGKALVAMRDLIQNINSTHIILSYNNEGIISEEDLTNILKEFSVDGIVDIKKIPYRKYQSKNVSKNKEIYELLFYIQRKPFSKNKTLNKPLNNVRVSSTKKYIKSPLNYIGGKYKLLNQILPLFPKNINTFVDIFSGGANVGINVKAKKYIFNDMNTRINEMFRYFQTQPPVKLVQQIEEKIDEWGLSKTNEDAFLAFRKHYNTNPNPLDLYVLSSFSYNYQFRFNNSMEFNNPFGRNRSHFSENMRNNLLNFVTKLQTLDATFTDNYFNEFDFSNLTSNDFIYLDPPYLITTGSYNDGKRGFSDWNNTSEMKLLNFMDYLNQHGIRFALSNVTEHKGKTNQLLKDWAYSRNLNVNYLDHNYNNSSHNSKSKGSQEVLITNYETKTFNLLNTK.

It belongs to the N(4)/N(6)-methyltransferase family. As to quaternary structure, monomer.

It carries out the reaction a 2'-deoxyadenosine in DNA + S-adenosyl-L-methionine = an N(6)-methyl-2'-deoxyadenosine in DNA + S-adenosyl-L-homocysteine + H(+). Functionally, an alpha subtype methylase that recognizes the double-stranded sequence 5'-GGATG-3' in one strand and 3'-CATCC-5' in the other, methylates A of both strands, and protects the DNA from cleavage by the StsI endonuclease. The 2 domains of the protein participate in modification of the two strands. In Streptococcus sanguinis, this protein is Modification methylase StsI (stsIM).